Consider the following 333-residue polypeptide: Biotin synthase (333 aa).

Residues 54–287 (ANHGAIHACS…TKIIKFAAGR (234 aa)) form the Radical SAM core domain. Positions 72, 76, and 79 each coordinate [4Fe-4S] cluster. 3 residues coordinate [2Fe-2S] cluster: Cys-151, Cys-212, and Lys-282.

It belongs to the radical SAM superfamily. Biotin synthase family. As to quaternary structure, homodimer. [4Fe-4S] cluster serves as cofactor. The cofactor is [2Fe-2S] cluster.

It carries out the reaction (4R,5S)-dethiobiotin + (sulfur carrier)-SH + 2 reduced [2Fe-2S]-[ferredoxin] + 2 S-adenosyl-L-methionine = (sulfur carrier)-H + biotin + 2 5'-deoxyadenosine + 2 L-methionine + 2 oxidized [2Fe-2S]-[ferredoxin]. It functions in the pathway cofactor biosynthesis; biotin biosynthesis; biotin from 7,8-diaminononanoate: step 2/2. Its function is as follows. Catalyzes the conversion of dethiobiotin (DTB) to biotin by the insertion of a sulfur atom into dethiobiotin via a radical-based mechanism. In Chlorobaculum tepidum (strain ATCC 49652 / DSM 12025 / NBRC 103806 / TLS) (Chlorobium tepidum), this protein is Biotin synthase.